Here is a 556-residue protein sequence, read N- to C-terminus: Formate--tetrahydrofolate ligase (556 aa).

65 to 72 (TPAGEGKT) serves as a coordination point for ATP.

Belongs to the formate--tetrahydrofolate ligase family.

The catalysed reaction is (6S)-5,6,7,8-tetrahydrofolate + formate + ATP = (6R)-10-formyltetrahydrofolate + ADP + phosphate. It participates in one-carbon metabolism; tetrahydrofolate interconversion. The polypeptide is Formate--tetrahydrofolate ligase (Proteus mirabilis (strain HI4320)).